Here is a 274-residue protein sequence, read N- to C-terminus: Penicillin-insensitive murein endopeptidase (274 aa).

Positions 1–19 (MNKTAIALLALLASSVSLA) are cleaved as a signal peptide. Intrachain disulfides connect C44-C265, C187-C235, and C216-C223. Residues H110, H113, D120, D147, H150, and H211 each contribute to the Zn(2+) site. Residues 227–274 (PLPPPGDGCGAELQSWFEPPKPGTTKPEKKTPPPLPPSCQALLDEHVI) form a disordered region.

This sequence belongs to the peptidase M74 family. In terms of assembly, dimer. Requires Zn(2+) as cofactor.

Its subcellular location is the periplasm. In terms of biological role, murein endopeptidase that cleaves the D-alanyl-meso-2,6-diamino-pimelyl amide bond that connects peptidoglycan strands. Likely plays a role in the removal of murein from the sacculus. The chain is Penicillin-insensitive murein endopeptidase from Shigella dysenteriae serotype 1 (strain Sd197).